A 345-amino-acid polypeptide reads, in one-letter code: ATP-dependent (S)-NAD(P)H-hydrate dehydratase (345 aa).

A YjeF C-terminal domain is found at 9-332; sequence ILSLARSMIP…DMVGEVYEEV (324 aa). (6S)-NADPHX is bound by residues glycine 113 and 170–176; that span reads NVMEFKR. Residues 208 to 212 and 241 to 250 each bind ATP; these read KGPSD and GGLKRVGGQG. Aspartate 251 provides a ligand contact to (6S)-NADPHX.

This sequence belongs to the NnrD/CARKD family. It depends on Mg(2+) as a cofactor.

The protein resides in the cytoplasm. The catalysed reaction is (6S)-NADHX + ATP = ADP + phosphate + NADH + H(+). The enzyme catalyses (6S)-NADPHX + ATP = ADP + phosphate + NADPH + H(+). Its function is as follows. Catalyzes the dehydration of the S-form of NAD(P)HX at the expense of ATP, which is converted to ADP. Together with NAD(P)HX epimerase, which catalyzes the epimerization of the S- and R-forms, the enzyme allows the repair of both epimers of NAD(P)HX, a damaged form of NAD(P)H that is a result of enzymatic or heat-dependent hydration. The polypeptide is ATP-dependent (S)-NAD(P)H-hydrate dehydratase (Cryptococcus neoformans var. neoformans serotype D (strain JEC21 / ATCC MYA-565) (Filobasidiella neoformans)).